A 347-amino-acid chain; its full sequence is GMP reductase (347 aa).

108 to 131 (ADFQKTKDIMAISDEFIFICIDIA) provides a ligand contact to NADP(+). Positions 181 and 183 each coordinate K(+). The Thioimidate intermediate role is filled by Cys-186. 216–239 (IIGDGGCSCAGDVAKAFGGGADFV) lines the NADP(+) pocket.

The protein belongs to the IMPDH/GMPR family. GuaC type 1 subfamily. Homotetramer.

It carries out the reaction IMP + NH4(+) + NADP(+) = GMP + NADPH + 2 H(+). Catalyzes the irreversible NADPH-dependent deamination of GMP to IMP. It functions in the conversion of nucleobase, nucleoside and nucleotide derivatives of G to A nucleotides, and in maintaining the intracellular balance of A and G nucleotides. This is GMP reductase from Vibrio campbellii (strain ATCC BAA-1116).